The sequence spans 106 residues: ATP-dependent Clp protease adapter protein ClpS (106 aa).

It belongs to the ClpS family. As to quaternary structure, binds to the N-terminal domain of the chaperone ClpA.

Involved in the modulation of the specificity of the ClpAP-mediated ATP-dependent protein degradation. The polypeptide is ATP-dependent Clp protease adapter protein ClpS (Edwardsiella ictaluri (strain 93-146)).